The sequence spans 1802 residues: Protein TIC 214 (1802 aa).

A run of 6 helical transmembrane segments spans residues 19 to 39 (IINS…FSIG), 68 to 88 (FIAG…HLAL), 91 to 111 (PHTI…WNNH), 133 to 153 (VFLN…SSML), 176 to 196 (VGWL…LVWI), and 227 to 247 (IFSI…PSPI).

The protein belongs to the TIC214 family. In terms of assembly, part of the Tic complex.

It is found in the plastid. Its subcellular location is the chloroplast inner membrane. Involved in protein precursor import into chloroplasts. May be part of an intermediate translocation complex acting as a protein-conducting channel at the inner envelope. The chain is Protein TIC 214 from Nasturtium officinale (Watercress).